The sequence spans 325 residues: ATP synthase subunit gamma, mitochondrial (325 aa).

A mitochondrion-targeting transit peptide spans 1–42 (MAMAVFRREGRRLLPSIAARPIAAIRSPLSSDQEEGLLGVRS).

It belongs to the ATPase gamma chain family. F-type ATPases have 2 components, CF(1) - the catalytic core - and CF(0) - the membrane proton channel. CF(1) has five subunits: alpha(3), beta(3), gamma(1), delta(1), epsilon(1). CF(0) has three main subunits: a, b and c.

The protein localises to the mitochondrion. Its subcellular location is the mitochondrion inner membrane. Its function is as follows. Mitochondrial membrane ATP synthase (F(1)F(0) ATP synthase or Complex V) produces ATP from ADP in the presence of a proton gradient across the membrane which is generated by electron transport complexes of the respiratory chain. F-type ATPases consist of two structural domains, F(1) - containing the extramembraneous catalytic core, and F(0) - containing the membrane proton channel, linked together by a central stalk and a peripheral stalk. During catalysis, ATP synthesis in the catalytic domain of F(1) is coupled via a rotary mechanism of the central stalk subunits to proton translocation. Part of the complex F(1) domain and the central stalk which is part of the complex rotary element. The gamma subunit protrudes into the catalytic domain formed of alpha(3)beta(3). Rotation of the central stalk against the surrounding alpha(3)beta(3) subunits leads to hydrolysis of ATP in three separate catalytic sites on the beta subunits. The protein is ATP synthase subunit gamma, mitochondrial (ATPC) of Arabidopsis thaliana (Mouse-ear cress).